The primary structure comprises 127 residues: Adult-specific rigid cuticular protein 12.6 (127 aa).

Residues 9–87 (GPAYNFGYNT…ALAALAPKAP (79 aa)) form the Chitin-binding type R&amp;R domain.

Component of the rigid cuticle of the spider. The sequence is that of Adult-specific rigid cuticular protein 12.6 from Araneus diadematus (European garden spider).